Consider the following 359-residue polypeptide: MSFTVHLNKILQKYQDLEADLNGGKLDNKELALISKEYSNLKPIIEKLNRYLKAHENIKYLQQVIDTEQDLELKSIAEVELYDTLNYLPKLEEEVKISLLPKESDDHKNAIIEVRAGTGGDEAALFAASLFQMYNRYAERKKWKFELLSISDTEIGGYKEASALISGNGVFANLKFESGVHRVQRIPKTESNGRIHTSAATVVVLPEAEEVDVKIDAKDLKIDTYRASGAGGQHVNTTDSAVRITHIPTGVVVSQQDEKSQHKNKAKAMKILYARLYDLEKQKSQQEQAMSRKVQVGTGDRSERIRTYNYPQGRVTDHRINLTLYKIEEIIQEGKLDEIINNLISENEAKKIADSNIQF.

At Q233 the chain carries N5-methylglutamine.

This sequence belongs to the prokaryotic/mitochondrial release factor family. Post-translationally, methylated by PrmC. Methylation increases the termination efficiency of RF1.

The protein localises to the cytoplasm. Its function is as follows. Peptide chain release factor 1 directs the termination of translation in response to the peptide chain termination codons UAG and UAA. This chain is Peptide chain release factor 1, found in Orientia tsutsugamushi (strain Ikeda) (Rickettsia tsutsugamushi).